A 376-amino-acid polypeptide reads, in one-letter code: Zinc-regulated transporter 1 (376 aa).

Over 1 to 50 (MSNVTTPWWKQWDPSEVTLADKTPDDVWKTCVLQGVYFGGNEYNGNLGAR) the chain is Extracellular. Residues 51-71 (ISSVFVILFVSTFFTMFPLIS) traverse the membrane as a helical segment. Residues 72-80 (TKVKRLRIP) are Cytoplasmic-facing. A helical membrane pass occupies residues 81 to 101 (LYVYLFAKYFGSGVIVATAFI). The Extracellular portion of the chain corresponds to 102-122 (HLMDPAYGAIGGTTCVGQTGN). The helical transmembrane segment at 123 to 143 (WGLYSWCPAIMLTSLTFTFLT) threads the bilayer. The Cytoplasmic portion of the chain corresponds to 144-216 (DLFSSVWVER…TSMDVVQSFQ (73 aa)). Positions 177–191 (VSSENDNENGTANGS) are enriched in polar residues. Residues 177–196 (VSSENDNENGTANGSHDTKN) are disordered. Residues 217-237 (AQFYAFLILEFGVIFHSVMIG) traverse the membrane as a helical segment. At 238–242 (LNLGS) the chain is on the extracellular side. Residues 243-263 (VGDEFSSLYPVLVFHQSFEGL) form a helical membrane-spanning segment. Topologically, residues 264–278 (GIGARLSAIEFPRSK) are cytoplasmic. A helical membrane pass occupies residues 279–299 (RWWPWALCVAYGLTTPICVAI). Over 300–310 (GLGVRTRYVSG) the chain is Extracellular. Residues 311–331 (SYTALVISGVLDAISAGILLY) form a helical membrane-spanning segment. At 332–354 (TGLVELLARDFIFNPQRTKDLRE) the chain is on the cytoplasmic side. A helical transmembrane segment spans residues 355–375 (LSFNVICTLFGAGIMALIGKW). Residue Ala-376 is a topological domain, extracellular.

It belongs to the ZIP transporter (TC 2.A.5) family.

The protein resides in the membrane. In terms of biological role, high-affinity zinc transport protein. In Saccharomyces cerevisiae (strain ATCC 204508 / S288c) (Baker's yeast), this protein is Zinc-regulated transporter 1 (ZRT1).